The chain runs to 457 residues: Solute carrier family 38 member 6 (457 aa).

Position 1 is an N-acetylmethionine (Met1). Phosphoserine is present on residues Ser4 and Ser7. Helical transmembrane passes span Phe48–Ala68, Val70–Ala90, Leu112–Gln132, Leu171–Phe191, and Leu192–Ile212. Residues Cys219 and Cys239 are joined by a disulfide bond. The N-linked (GlcNAc...) asparagine glycan is linked to Asn234. The helical transmembrane segment at Val251–Tyr271 threads the bilayer. N-linked (GlcNAc...) asparagine glycosylation is present at Asn284. Transmembrane regions (helical) follow at residues Ala289–Tyr309, Ala328–Ile348, Ser372–Ile392, Val395–Phe415, and Ala432–Leu452.

This sequence belongs to the amino acid/polyamine transporter 2 family.

Its subcellular location is the cell membrane. It is found in the synapse. It catalyses the reaction L-glutamine(out) = L-glutamine(in). It carries out the reaction L-glutamate(out) = L-glutamate(in). Functionally, amino acid transporter with an apparent selectivity for L-glutamine and L-glutamate. May facilitate glutamine uptake in excitatory neurons. The transport mechanism remains to be elucidated. The chain is Solute carrier family 38 member 6 from Rattus norvegicus (Rat).